A 686-amino-acid chain; its full sequence is DNA ligase (686 aa).

NAD(+) is bound by residues 33 to 37, 82 to 83, and E122; these read DSVYD and SL. The active-site N6-AMP-lysine intermediate is K124. The NAD(+) site is built by R145, E182, K300, and K324. Positions 418, 421, 436, and 441 each coordinate Zn(2+). The BRCT domain maps to 600–686; sequence AVSQILAGKK…PTVESGDLHP (87 aa).

This sequence belongs to the NAD-dependent DNA ligase family. LigA subfamily. Mg(2+) is required as a cofactor. Requires Mn(2+) as cofactor.

It carries out the reaction NAD(+) + (deoxyribonucleotide)n-3'-hydroxyl + 5'-phospho-(deoxyribonucleotide)m = (deoxyribonucleotide)n+m + AMP + beta-nicotinamide D-nucleotide.. Its function is as follows. DNA ligase that catalyzes the formation of phosphodiester linkages between 5'-phosphoryl and 3'-hydroxyl groups in double-stranded DNA using NAD as a coenzyme and as the energy source for the reaction. It is essential for DNA replication and repair of damaged DNA. The protein is DNA ligase of Synechococcus sp. (strain JA-2-3B'a(2-13)) (Cyanobacteria bacterium Yellowstone B-Prime).